We begin with the raw amino-acid sequence, 282 residues long: Pantothenate synthetase (282 aa).

30–37 (MGYLHEGH) serves as a coordination point for ATP. Catalysis depends on histidine 37, which acts as the Proton donor. (R)-pantoate is bound at residue glutamine 61. Residue glutamine 61 coordinates beta-alanine. ATP is bound at residue 147-150 (GMKD). Position 153 (glutamine 153) interacts with (R)-pantoate. ATP is bound by residues valine 176 and 184 to 187 (KSSR).

The protein belongs to the pantothenate synthetase family. In terms of assembly, homodimer.

The protein resides in the cytoplasm. The catalysed reaction is (R)-pantoate + beta-alanine + ATP = (R)-pantothenate + AMP + diphosphate + H(+). Its pathway is cofactor biosynthesis; (R)-pantothenate biosynthesis; (R)-pantothenate from (R)-pantoate and beta-alanine: step 1/1. Catalyzes the condensation of pantoate with beta-alanine in an ATP-dependent reaction via a pantoyl-adenylate intermediate. This chain is Pantothenate synthetase, found in Bacillus cereus (strain ATCC 14579 / DSM 31 / CCUG 7414 / JCM 2152 / NBRC 15305 / NCIMB 9373 / NCTC 2599 / NRRL B-3711).